Reading from the N-terminus, the 312-residue chain is tRNA-cytidine(32) 2-sulfurtransferase (312 aa).

The PP-loop motif signature appears at 39–44 (SGGKDS). [4Fe-4S] cluster is bound by residues cysteine 114, cysteine 117, and cysteine 205.

Belongs to the TtcA family. As to quaternary structure, homodimer. It depends on Mg(2+) as a cofactor. [4Fe-4S] cluster is required as a cofactor.

Its subcellular location is the cytoplasm. The enzyme catalyses cytidine(32) in tRNA + S-sulfanyl-L-cysteinyl-[cysteine desulfurase] + AH2 + ATP = 2-thiocytidine(32) in tRNA + L-cysteinyl-[cysteine desulfurase] + A + AMP + diphosphate + H(+). It participates in tRNA modification. Functionally, catalyzes the ATP-dependent 2-thiolation of cytidine in position 32 of tRNA, to form 2-thiocytidine (s(2)C32). The sulfur atoms are provided by the cysteine/cysteine desulfurase (IscS) system. This Ralstonia nicotianae (strain ATCC BAA-1114 / GMI1000) (Ralstonia solanacearum) protein is tRNA-cytidine(32) 2-sulfurtransferase.